The chain runs to 499 residues: UDP-N-acetylmuramoyl-L-alanyl-D-glutamate--2,6-diaminopimelate ligase (499 aa).

2 residues coordinate UDP-N-acetyl-alpha-D-muramoyl-L-alanyl-D-glutamate: L30 and S32. An ATP-binding site is contributed by 122-128; that stretch reads GTNGKTT. UDP-N-acetyl-alpha-D-muramoyl-L-alanyl-D-glutamate-binding positions include 164 to 165, S191, Q197, and R199; that span reads TT. K231 is subject to N6-carboxylysine. Residues R397, 421 to 424, G472, and E476 each bind meso-2,6-diaminopimelate; that span reads DNPR. The Meso-diaminopimelate recognition motif signature appears at 421–424; that stretch reads DNPR.

This sequence belongs to the MurCDEF family. MurE subfamily. Requires Mg(2+) as cofactor. Carboxylation is probably crucial for Mg(2+) binding and, consequently, for the gamma-phosphate positioning of ATP.

It localises to the cytoplasm. It carries out the reaction UDP-N-acetyl-alpha-D-muramoyl-L-alanyl-D-glutamate + meso-2,6-diaminopimelate + ATP = UDP-N-acetyl-alpha-D-muramoyl-L-alanyl-gamma-D-glutamyl-meso-2,6-diaminopimelate + ADP + phosphate + H(+). It functions in the pathway cell wall biogenesis; peptidoglycan biosynthesis. Functionally, catalyzes the addition of meso-diaminopimelic acid to the nucleotide precursor UDP-N-acetylmuramoyl-L-alanyl-D-glutamate (UMAG) in the biosynthesis of bacterial cell-wall peptidoglycan. In Blochmanniella floridana, this protein is UDP-N-acetylmuramoyl-L-alanyl-D-glutamate--2,6-diaminopimelate ligase.